We begin with the raw amino-acid sequence, 244 residues long: tRNA pseudouridine synthase A (244 aa).

The active-site Nucleophile is the D52. Substrate is bound at residue Y110.

The protein belongs to the tRNA pseudouridine synthase TruA family. Homodimer.

It carries out the reaction uridine(38/39/40) in tRNA = pseudouridine(38/39/40) in tRNA. Formation of pseudouridine at positions 38, 39 and 40 in the anticodon stem and loop of transfer RNAs. This is tRNA pseudouridine synthase A from Geotalea daltonii (strain DSM 22248 / JCM 15807 / FRC-32) (Geobacter daltonii).